A 287-amino-acid polypeptide reads, in one-letter code: Light-independent protochlorophyllide reductase iron-sulfur ATP-binding protein (287 aa).

Residues 10-15 and Lys-39 each bind ATP; that span reads GVGKST. A Mg(2+)-binding site is contributed by Ser-14. [4Fe-4S] cluster-binding residues include Cys-95 and Cys-129. Residue 181 to 182 participates in ATP binding; that stretch reads NR.

It belongs to the NifH/BchL/ChlL family. As to quaternary structure, homodimer. Protochlorophyllide reductase is composed of three subunits; BchL, BchN and BchB. It depends on [4Fe-4S] cluster as a cofactor.

It catalyses the reaction chlorophyllide a + oxidized 2[4Fe-4S]-[ferredoxin] + 2 ADP + 2 phosphate = protochlorophyllide a + reduced 2[4Fe-4S]-[ferredoxin] + 2 ATP + 2 H2O. It functions in the pathway porphyrin-containing compound metabolism; bacteriochlorophyll biosynthesis (light-independent). Functionally, component of the dark-operative protochlorophyllide reductase (DPOR) that uses Mg-ATP and reduced ferredoxin to reduce ring D of protochlorophyllide (Pchlide) to form chlorophyllide a (Chlide). This reaction is light-independent. The L component serves as a unique electron donor to the NB-component of the complex, and binds Mg-ATP. The protein is Light-independent protochlorophyllide reductase iron-sulfur ATP-binding protein of Heliobacterium modesticaldum (strain ATCC 51547 / Ice1).